The following is a 377-amino-acid chain: 3-dehydroquinate synthase (377 aa).

Residues 115-119 (GVIGD), 139-140 (TS), Lys-152, and Lys-162 each bind NAD(+). Positions 195, 257, and 276 each coordinate Zn(2+).

Belongs to the sugar phosphate cyclases superfamily. Dehydroquinate synthase family. Requires Co(2+) as cofactor. The cofactor is Zn(2+). It depends on NAD(+) as a cofactor.

It is found in the cytoplasm. The catalysed reaction is 7-phospho-2-dehydro-3-deoxy-D-arabino-heptonate = 3-dehydroquinate + phosphate. The protein operates within metabolic intermediate biosynthesis; chorismate biosynthesis; chorismate from D-erythrose 4-phosphate and phosphoenolpyruvate: step 2/7. Functionally, catalyzes the conversion of 3-deoxy-D-arabino-heptulosonate 7-phosphate (DAHP) to dehydroquinate (DHQ). In Rhizobium etli (strain ATCC 51251 / DSM 11541 / JCM 21823 / NBRC 15573 / CFN 42), this protein is 3-dehydroquinate synthase.